The sequence spans 89 residues: UPF0335 protein Nwi_0989 (89 aa).

It belongs to the UPF0335 family.

This Nitrobacter winogradskyi (strain ATCC 25391 / DSM 10237 / CIP 104748 / NCIMB 11846 / Nb-255) protein is UPF0335 protein Nwi_0989.